The following is a 347-amino-acid chain: 3,4-dihydroxy-2-butanone 4-phosphate synthase (347 aa).

Residues 1–200 (MPLNRVREAI…ISDLIEYRMQ (200 aa)) are DHBP synthase. D-ribulose 5-phosphate is bound by residues 27-28 (RE), Asp-32, 139-143 (RTGHT), and Glu-163. Glu-28 lines the Mg(2+) pocket. Residue His-142 participates in Mg(2+) binding. The tract at residues 201–347 (NEMLILIKER…IVLQGGPIQL (147 aa)) is GTP cyclohydrolase II-like.

This sequence in the N-terminal section; belongs to the DHBP synthase family. In the C-terminal section; belongs to the GTP cyclohydrolase II family. Mg(2+) is required as a cofactor. The cofactor is Mn(2+).

It carries out the reaction D-ribulose 5-phosphate = (2S)-2-hydroxy-3-oxobutyl phosphate + formate + H(+). It participates in cofactor biosynthesis; riboflavin biosynthesis; 2-hydroxy-3-oxobutyl phosphate from D-ribulose 5-phosphate: step 1/1. Functionally, catalyzes the conversion of D-ribulose 5-phosphate to formate and 3,4-dihydroxy-2-butanone 4-phosphate. The protein is 3,4-dihydroxy-2-butanone 4-phosphate synthase (ribB) of Wolinella succinogenes (strain ATCC 29543 / DSM 1740 / CCUG 13145 / JCM 31913 / LMG 7466 / NCTC 11488 / FDC 602W) (Vibrio succinogenes).